Here is a 194-residue protein sequence, read N- to C-terminus: Leucyl/phenylalanyl-tRNA--protein transferase (194 aa).

This sequence belongs to the L/F-transferase family.

It localises to the cytoplasm. The catalysed reaction is N-terminal L-lysyl-[protein] + L-leucyl-tRNA(Leu) = N-terminal L-leucyl-L-lysyl-[protein] + tRNA(Leu) + H(+). The enzyme catalyses N-terminal L-arginyl-[protein] + L-leucyl-tRNA(Leu) = N-terminal L-leucyl-L-arginyl-[protein] + tRNA(Leu) + H(+). It carries out the reaction L-phenylalanyl-tRNA(Phe) + an N-terminal L-alpha-aminoacyl-[protein] = an N-terminal L-phenylalanyl-L-alpha-aminoacyl-[protein] + tRNA(Phe). Functions in the N-end rule pathway of protein degradation where it conjugates Leu, Phe and, less efficiently, Met from aminoacyl-tRNAs to the N-termini of proteins containing an N-terminal arginine or lysine. In Chlorobium phaeobacteroides (strain DSM 266 / SMG 266 / 2430), this protein is Leucyl/phenylalanyl-tRNA--protein transferase.